A 334-amino-acid polypeptide reads, in one-letter code: Ornithine carbamoyltransferase (334 aa).

Carbamoyl phosphate-binding positions include 57-60 (STRT), Gln-84, Arg-108, and 135-138 (HPTQ). L-ornithine contacts are provided by residues Asn-169, Asp-233, and 237 to 238 (SM). Residues 275–276 (CL) and Arg-320 each bind carbamoyl phosphate.

Belongs to the aspartate/ornithine carbamoyltransferase superfamily. OTCase family. In terms of assembly, homotrimer.

Its subcellular location is the cytoplasm. It catalyses the reaction carbamoyl phosphate + L-ornithine = L-citrulline + phosphate + H(+). It participates in amino-acid biosynthesis; L-arginine biosynthesis; L-arginine from L-ornithine and carbamoyl phosphate: step 1/3. Functionally, reversibly catalyzes the transfer of the carbamoyl group from carbamoyl phosphate (CP) to the N(epsilon) atom of ornithine (ORN) to produce L-citrulline. The protein is Ornithine carbamoyltransferase of Vibrio vulnificus (strain CMCP6).